We begin with the raw amino-acid sequence, 199 residues long: Holliday junction branch migration complex subunit RuvA (199 aa).

The domain I stretch occupies residues 1 to 63 (MIGCLIGEVF…EDAQQLYGFS (63 aa)). The domain II stretch occupies residues 64 to 142 (DAQEKTIFRT…TLAQGTSSAA (79 aa)). The flexible linker stretch occupies residues 143–150 (ALPQIQFV). The interval 150 to 199 (VSNSPVAEAEAALQSLGYKPLEAQKAVAAVKADYTESADIIRAALKSMMK) is domain III.

The protein belongs to the RuvA family. Homotetramer. Forms an RuvA(8)-RuvB(12)-Holliday junction (HJ) complex. HJ DNA is sandwiched between 2 RuvA tetramers; dsDNA enters through RuvA and exits via RuvB. An RuvB hexamer assembles on each DNA strand where it exits the tetramer. Each RuvB hexamer is contacted by two RuvA subunits (via domain III) on 2 adjacent RuvB subunits; this complex drives branch migration. In the full resolvosome a probable DNA-RuvA(4)-RuvB(12)-RuvC(2) complex forms which resolves the HJ.

It is found in the cytoplasm. The RuvA-RuvB-RuvC complex processes Holliday junction (HJ) DNA during genetic recombination and DNA repair, while the RuvA-RuvB complex plays an important role in the rescue of blocked DNA replication forks via replication fork reversal (RFR). RuvA specifically binds to HJ cruciform DNA, conferring on it an open structure. The RuvB hexamer acts as an ATP-dependent pump, pulling dsDNA into and through the RuvAB complex. HJ branch migration allows RuvC to scan DNA until it finds its consensus sequence, where it cleaves and resolves the cruciform DNA. The chain is Holliday junction branch migration complex subunit RuvA from Acinetobacter baumannii (strain SDF).